We begin with the raw amino-acid sequence, 219 residues long: Probable GTP-binding protein EngB (219 aa).

One can recognise an EngB-type G domain in the interval 31-205; it reads VGVEIAFAGR…LSILNEWCHP (175 aa). GTP-binding positions include 39–46, 66–70, 84–87, 151–154, and 184–186; these read GRSNAGKS, GRTQL, DLPG, TKSD, and FSS. Mg(2+) is bound by residues S46 and T68.

It belongs to the TRAFAC class TrmE-Era-EngA-EngB-Septin-like GTPase superfamily. EngB GTPase family. Mg(2+) is required as a cofactor.

Functionally, necessary for normal cell division and for the maintenance of normal septation. This is Probable GTP-binding protein EngB from Shewanella denitrificans (strain OS217 / ATCC BAA-1090 / DSM 15013).